We begin with the raw amino-acid sequence, 341 residues long: uncharacterized protein (341 aa).

A compositionally biased stretch (basic residues) spans 1 to 12 (NSRIAHVPKSKK). Disordered regions lie at residues 1 to 21 (NSRI…SPRF) and 291 to 317 (KARM…NPED). Residues 297–312 (SGKNYQQRPSRTTSPA) show a composition bias toward polar residues.

This is an uncharacterized protein from Lachancea kluyveri (strain ATCC 58438 / CBS 3082 / BCRC 21498 / NBRC 1685 / JCM 7257 / NCYC 543 / NRRL Y-12651) (Yeast).